Consider the following 106-residue polypeptide: Glycine/glutamate-rich protein sgp1 (106 aa).

The first 20 residues, 1-20, serve as a signal peptide directing secretion; the sequence is MKYSLIFILTLACLIASSLA. The segment at 20-66 is disordered; sequence ARPEGEEKPADDAAGDKKEEGAEGDKTAAGGDEGFTGGDGKNAGGAG. Basic and acidic residues predominate over residues 22–45; it reads PEGEEKPADDAAGDKKEEGAEGDK. Positions 50–66 are enriched in gly residues; the sequence is GDEGFTGGDGKNAGGAG.

It localises to the secreted. In Glossina morsitans morsitans (Savannah tsetse fly), this protein is Glycine/glutamate-rich protein sgp1 (sgp1).